Consider the following 325-residue polypeptide: GMP reductase (325 aa).

Residue C173 is the Thioimidate intermediate of the active site. I202–V225 is an NADP(+) binding site.

The protein belongs to the IMPDH/GMPR family. GuaC type 2 subfamily.

It carries out the reaction IMP + NH4(+) + NADP(+) = GMP + NADPH + 2 H(+). Functionally, catalyzes the irreversible NADPH-dependent deamination of GMP to IMP. It functions in the conversion of nucleobase, nucleoside and nucleotide derivatives of G to A nucleotides, and in maintaining the intracellular balance of A and G nucleotides. The chain is GMP reductase from Paracidovorax citrulli (strain AAC00-1) (Acidovorax citrulli).